The primary structure comprises 139 residues: Large ribosomal subunit protein uL16 (139 aa).

The span at 1-20 shows a compositional bias: basic residues; it reads MLIPRRVKHRKQHHPKRRGM. The segment at 1–22 is disordered; that stretch reads MLIPRRVKHRKQHHPKRRGMAK.

The protein belongs to the universal ribosomal protein uL16 family. In terms of assembly, part of the 50S ribosomal subunit.

Functionally, binds 23S rRNA and is also seen to make contacts with the A and possibly P site tRNAs. The protein is Large ribosomal subunit protein uL16 of Streptomyces coelicolor (strain ATCC BAA-471 / A3(2) / M145).